Consider the following 1041-residue polypeptide: Serine-repeat antigen protein 6 (1041 aa).

An N-terminal signal peptide occupies residues 1–34 (MIFFNFKLNRMICPIFFLYIINVLFTQYFIKCEG). Residue N84 is glycosylated (N-linked (GlcNAc...) asparagine). Residues 101–111 (KVVSSSESGKG) show a composition bias toward low complexity. A disordered region spans residues 101-173 (KVVSSSESGK…TESSSETLNK (73 aa)). Over residues 114–149 (VSHTKVTSEGLSDTQPNVTQSVSSSTHTPGSLDSTM) the composition is skewed to polar residues. N130 carries N-linked (GlcNAc...) asparagine glycosylation. Residues 150–168 (STEQHSSVSQSSLPTESSS) are compositionally biased toward low complexity. N459 carries N-linked (GlcNAc...) asparagine glycosylation. Residues 500–577 (TLPSESPSES…GDTNYVYDFD (78 aa)) are disordered. Low complexity predominate over residues 502 to 515 (PSESPSESSSKSDS). Residues 521–545 (NDKDKNEDKDDMSKNSKEEFKNDDK) are compositionally biased toward basic and acidic residues. A glycan (N-linked (GlcNAc...) asparagine) is linked at N554. The span at 564–574 (NINNGDTNYVY) shows a compositional bias: low complexity. N583 is a glycosylation site (N-linked (GlcNAc...) asparagine). Residue C654 is part of the active site. An N-linked (GlcNAc...) asparagine glycan is attached at N684. Residues H820 and N845 contribute to the active site. N984 is a glycosylation site (N-linked (GlcNAc...) asparagine).

It belongs to the peptidase C1 family. Just prior to merozoite egress from host erythrocytes, proteolytically cleaved by SUB1 to generate the active 75kDa form.

It localises to the parasitophorous vacuole lumen. Its subcellular location is the parasitophorous vacuole membrane. Functionally, cysteine protease which plays an essential role in merozoite egress from host erythrocytes. May cleave host SPTB/beta spectrin and ANK1/ankyrin-1 which disrupts host erythrocyte actin cytoskeleton and leads to host erythrocyte cell membrane rupture. The polypeptide is Serine-repeat antigen protein 6 (Plasmodium falciparum).